The following is a 647-amino-acid chain: Acetyl-coenzyme A synthetase (647 aa).

CoA-binding positions include 192–195 (RGGR), threonine 310, and asparagine 334. Residues 386–388 (GEP), 410–415 (DTWWQT), aspartate 499, and arginine 514 contribute to the ATP site. A CoA-binding site is contributed by serine 522. Arginine 525 provides a ligand contact to ATP. Mg(2+)-binding residues include valine 536, histidine 538, and valine 541. Arginine 583 contacts CoA. Position 608 is an N6-acetyllysine (lysine 608).

Belongs to the ATP-dependent AMP-binding enzyme family. Requires Mg(2+) as cofactor. In terms of processing, acetylated. Deacetylation by the SIR2-homolog deacetylase activates the enzyme.

It carries out the reaction acetate + ATP + CoA = acetyl-CoA + AMP + diphosphate. In terms of biological role, catalyzes the conversion of acetate into acetyl-CoA (AcCoA), an essential intermediate at the junction of anabolic and catabolic pathways. AcsA undergoes a two-step reaction. In the first half reaction, AcsA combines acetate with ATP to form acetyl-adenylate (AcAMP) intermediate. In the second half reaction, it can then transfer the acetyl group from AcAMP to the sulfhydryl group of CoA, forming the product AcCoA. The polypeptide is Acetyl-coenzyme A synthetase (Caulobacter vibrioides (strain ATCC 19089 / CIP 103742 / CB 15) (Caulobacter crescentus)).